We begin with the raw amino-acid sequence, 516 residues long: Probable serine/threonine-protein kinase ECU02_0550 (516 aa).

The region spanning Y4–F230 is the Protein kinase domain. ATP is bound by residues I10–V18 and K32. The Proton acceptor role is filled by D120.

Belongs to the protein kinase superfamily. CAMK Ser/Thr protein kinase family.

It carries out the reaction L-seryl-[protein] + ATP = O-phospho-L-seryl-[protein] + ADP + H(+). The enzyme catalyses L-threonyl-[protein] + ATP = O-phospho-L-threonyl-[protein] + ADP + H(+). This is Probable serine/threonine-protein kinase ECU02_0550 from Encephalitozoon cuniculi (strain GB-M1) (Microsporidian parasite).